The primary structure comprises 304 residues: Phosphoribosylaminoimidazole-succinocarboxamide synthase (304 aa).

The protein belongs to the SAICAR synthetase family.

The catalysed reaction is 5-amino-1-(5-phospho-D-ribosyl)imidazole-4-carboxylate + L-aspartate + ATP = (2S)-2-[5-amino-1-(5-phospho-beta-D-ribosyl)imidazole-4-carboxamido]succinate + ADP + phosphate + 2 H(+). The protein operates within purine metabolism; IMP biosynthesis via de novo pathway; 5-amino-1-(5-phospho-D-ribosyl)imidazole-4-carboxamide from 5-amino-1-(5-phospho-D-ribosyl)imidazole-4-carboxylate: step 1/2. The polypeptide is Phosphoribosylaminoimidazole-succinocarboxamide synthase (ADE1) (Komagataella pastoris (Yeast)).